The following is a 51-amino-acid chain: Large ribosomal subunit protein eL39 (51 aa).

The protein belongs to the eukaryotic ribosomal protein eL39 family.

The sequence is that of Large ribosomal subunit protein eL39 (rpl39e) from Methanocaldococcus jannaschii (strain ATCC 43067 / DSM 2661 / JAL-1 / JCM 10045 / NBRC 100440) (Methanococcus jannaschii).